The primary structure comprises 329 residues: Endo-beta-N-acetylglucosaminidase F3 (329 aa).

Residues 1–39 (MKKIFFAQCSILLLMLGSCSKMTEDMTPESVNKEASVKS) constitute a signal peptide (or 40, or 41). The GH18 domain maps to 48–329 (GVCIAYYITD…ANAVRDAVKN (282 aa)). Residue T88 is glycosylated (O-linked (Man...) threonine). Residue E167 is the Proton donor of the active site.

The protein belongs to the glycosyl hydrolase 18 family. As to quaternary structure, monomer. Carbohydrate at Thr-88 consists of (2-OMe)Man1-4GlcNAcU1-4GlcU1-4Glc1-4(2-OMe)GlcU1-4[(2-OMe)Rham1-2]Man.

The protein localises to the secreted. It catalyses the reaction an N(4)-(oligosaccharide-(1-&gt;3)-[oligosaccharide-(1-&gt;6)]-beta-D-Man-(1-&gt;4)-beta-D-GlcNAc-(1-&gt;4)-alpha-D-GlcNAc)-L-asparaginyl-[protein] + H2O = an oligosaccharide-(1-&gt;3)-[oligosaccharide-(1-&gt;6)]-beta-D-Man-(1-&gt;4)-D-GlcNAc + N(4)-(N-acetyl-beta-D-glucosaminyl)-L-asparaginyl-[protein]. In terms of biological role, endohydrolysis of the di-N-acetylchitobiosyl unit in high-mannose glycopeptides and glycoproteins. Hydrolyzes bi- and triantennary glycans. The presence of a core-bound fucose greatly augments endo F3 activity on biantennary and, presumably, triantennary oligosaccharides. This is Endo-beta-N-acetylglucosaminidase F3 (endOF3) from Elizabethkingia meningoseptica (Chryseobacterium meningosepticum).